Reading from the N-terminus, the 278-residue chain is Ubiquinone biosynthesis protein COQ4, mitochondrial (278 aa).

The transit peptide at M1–F28 directs the protein to the mitochondrion. H164, D165, H168, and E180 together coordinate Zn(2+).

It belongs to the COQ4 family. In terms of assembly, component of a multi-subunit COQ enzyme complex, composed of at least COQ3, COQ4, COQ5, COQ6, COQ7 and COQ9. The cofactor is Zn(2+).

Its subcellular location is the mitochondrion inner membrane. It carries out the reaction a 4-hydroxy-3-methoxy-5-(all-trans-polyprenyl)benzoate + H(+) = a 2-methoxy-6-(all-trans-polyprenyl)phenol + CO2. The protein operates within cofactor biosynthesis; ubiquinone biosynthesis. In terms of biological role, lyase that catalyzes the C1-decarboxylation of 4-hydroxy-3-methoxy-5-(all-trans-polyprenyl)benzoic acid into 2-methoxy-6-(all-trans-polyprenyl)phenol during ubiquinone biosynthesis. This is Ubiquinone biosynthesis protein COQ4, mitochondrial from Uncinocarpus reesii (strain UAMH 1704).